The primary structure comprises 278 residues: 4-diphosphocytidyl-2-C-methyl-D-erythritol kinase (278 aa).

Residue lysine 9 is part of the active site. 89–99 (PVASGIGGGSA) is an ATP binding site. Residue aspartate 128 is part of the active site.

This sequence belongs to the GHMP kinase family. IspE subfamily.

The catalysed reaction is 4-CDP-2-C-methyl-D-erythritol + ATP = 4-CDP-2-C-methyl-D-erythritol 2-phosphate + ADP + H(+). Its pathway is isoprenoid biosynthesis; isopentenyl diphosphate biosynthesis via DXP pathway; isopentenyl diphosphate from 1-deoxy-D-xylulose 5-phosphate: step 3/6. Its function is as follows. Catalyzes the phosphorylation of the position 2 hydroxy group of 4-diphosphocytidyl-2C-methyl-D-erythritol. This chain is 4-diphosphocytidyl-2-C-methyl-D-erythritol kinase, found in Cereibacter sphaeroides (strain ATCC 17029 / ATH 2.4.9) (Rhodobacter sphaeroides).